Consider the following 1389-residue polypeptide: DNA-directed RNA polymerase subunit beta'' (1389 aa).

Zn(2+) is bound by residues cysteine 224, cysteine 295, cysteine 302, and cysteine 305.

It belongs to the RNA polymerase beta' chain family. RpoC2 subfamily. As to quaternary structure, in plastids the minimal PEP RNA polymerase catalytic core is composed of four subunits: alpha, beta, beta', and beta''. When a (nuclear-encoded) sigma factor is associated with the core the holoenzyme is formed, which can initiate transcription. Zn(2+) serves as cofactor.

The protein localises to the plastid. It is found in the chloroplast. It catalyses the reaction RNA(n) + a ribonucleoside 5'-triphosphate = RNA(n+1) + diphosphate. DNA-dependent RNA polymerase catalyzes the transcription of DNA into RNA using the four ribonucleoside triphosphates as substrates. The protein is DNA-directed RNA polymerase subunit beta'' of Morus indica (Mulberry).